The primary structure comprises 444 residues: Tol-Pal system protein TolB (444 aa).

Positions 1 to 19 are cleaved as a signal peptide; sequence MRNIIYFILSLLFSVTSYA.

The protein belongs to the TolB family. As to quaternary structure, the Tol-Pal system is composed of five core proteins: the inner membrane proteins TolA, TolQ and TolR, the periplasmic protein TolB and the outer membrane protein Pal. They form a network linking the inner and outer membranes and the peptidoglycan layer.

Its subcellular location is the periplasm. Its function is as follows. Part of the Tol-Pal system, which plays a role in outer membrane invagination during cell division and is important for maintaining outer membrane integrity. The polypeptide is Tol-Pal system protein TolB (Rickettsia rickettsii (strain Sheila Smith)).